The chain runs to 121 residues: Small ribosomal subunit protein uS13 (121 aa).

Positions 96 to 121 (PVRGQNTKNNARTRKGKAVAIAGKKK) are disordered. Residues 106–121 (ARTRKGKAVAIAGKKK) show a composition bias toward basic residues.

This sequence belongs to the universal ribosomal protein uS13 family. In terms of assembly, part of the 30S ribosomal subunit. Forms a loose heterodimer with protein S19. Forms two bridges to the 50S subunit in the 70S ribosome.

In terms of biological role, located at the top of the head of the 30S subunit, it contacts several helices of the 16S rRNA. In the 70S ribosome it contacts the 23S rRNA (bridge B1a) and protein L5 of the 50S subunit (bridge B1b), connecting the 2 subunits; these bridges are implicated in subunit movement. Contacts the tRNAs in the A and P-sites. This Streptococcus suis (strain 05ZYH33) protein is Small ribosomal subunit protein uS13.